Consider the following 429-residue polypeptide: Trigger factor (429 aa).

The 86-residue stretch at 161-246 (EDRVTIDFTG…LKKVEERELP (86 aa)) folds into the PPIase FKBP-type domain.

It belongs to the FKBP-type PPIase family. Tig subfamily. In terms of assembly, homodimer and monomer. In vivo most of the ribosomes are in complex with monomeric TF. Uncomplexed TF, however, is in a monomer-dimer equilibrium with approximately two thirds of TF existing in a dimeric state.

The protein resides in the cytoplasm. It carries out the reaction [protein]-peptidylproline (omega=180) = [protein]-peptidylproline (omega=0). Its function is as follows. Involved in protein export. Acts as a chaperone by maintaining the newly synthesized protein in an open conformation. Functions as a peptidyl-prolyl cis-trans isomerase. This chain is Trigger factor, found in Escherichia coli O45:K1 (strain S88 / ExPEC).